Consider the following 597-residue polypeptide: Elongation factor 4 (597 aa).

One can recognise a tr-type G domain in the interval 2–184; that stretch reads KNIRNFSIIA…EIVAKIPAPT (183 aa). GTP-binding positions include 14 to 19 and 131 to 134; these read DHGKST and NKID.

It belongs to the TRAFAC class translation factor GTPase superfamily. Classic translation factor GTPase family. LepA subfamily.

It localises to the cell inner membrane. It carries out the reaction GTP + H2O = GDP + phosphate + H(+). Its function is as follows. Required for accurate and efficient protein synthesis under certain stress conditions. May act as a fidelity factor of the translation reaction, by catalyzing a one-codon backward translocation of tRNAs on improperly translocated ribosomes. Back-translocation proceeds from a post-translocation (POST) complex to a pre-translocation (PRE) complex, thus giving elongation factor G a second chance to translocate the tRNAs correctly. Binds to ribosomes in a GTP-dependent manner. This chain is Elongation factor 4, found in Neisseria gonorrhoeae (strain ATCC 700825 / FA 1090).